The sequence spans 325 residues: Bifunctional ligase/repressor BirA (325 aa).

A DNA-binding region (H-T-H motif) is located at residues 23-42; it reads GQKISDALGCSRTAVWKHIE. The BPL/LPL catalytic domain occupies 74–262; it reads RFGLKTEVMG…CFEKRYRDYM (189 aa). Biotin contacts are provided by residues Gln-118, 122–124, and Lys-189; that span reads RGR.

The protein belongs to the biotin--protein ligase family.

The enzyme catalyses biotin + L-lysyl-[protein] + ATP = N(6)-biotinyl-L-lysyl-[protein] + AMP + diphosphate + H(+). Acts both as a biotin--[acetyl-CoA-carboxylase] ligase and a repressor. In Bacillus subtilis (strain 168), this protein is Bifunctional ligase/repressor BirA.